The primary structure comprises 375 residues: CCA-adding enzyme (375 aa).

2 residues coordinate ATP: Gly-8 and Arg-11. Positions 8 and 11 each coordinate CTP. Mg(2+)-binding residues include Asp-21 and Asp-23. ATP is bound by residues Arg-91, Arg-137, and Arg-140. The CTP site is built by Arg-91, Arg-137, and Arg-140.

Belongs to the tRNA nucleotidyltransferase/poly(A) polymerase family. Bacterial CCA-adding enzyme type 2 subfamily. The cofactor is Mg(2+).

The enzyme catalyses a tRNA precursor + 2 CTP + ATP = a tRNA with a 3' CCA end + 3 diphosphate. It carries out the reaction a tRNA with a 3' CCA end + 2 CTP + ATP = a tRNA with a 3' CCACCA end + 3 diphosphate. Functionally, catalyzes the addition and repair of the essential 3'-terminal CCA sequence in tRNAs without using a nucleic acid template. Adds these three nucleotides in the order of C, C, and A to the tRNA nucleotide-73, using CTP and ATP as substrates and producing inorganic pyrophosphate. tRNA 3'-terminal CCA addition is required both for tRNA processing and repair. Also involved in tRNA surveillance by mediating tandem CCA addition to generate a CCACCA at the 3' terminus of unstable tRNAs. While stable tRNAs receive only 3'-terminal CCA, unstable tRNAs are marked with CCACCA and rapidly degraded. This chain is CCA-adding enzyme, found in Pseudomonas entomophila (strain L48).